The primary structure comprises 445 residues: MSATTHIDAPALPKRGKSKPFYKVLYVQVLFAIVVGVLVGWLSPHFATNEWIKALGDGFVKLIKMVIAPIIFCTVVSGIAHIQDARKVGRVGIKALLYFEVVSSFALVLGLIVGNLFPVGHGLAAKPDAGAVAKYVDQASHMSAVDFVLHIIPDSVVGAFAKGDILQVLLFAVLFGFALMALGERGHRLRDVIDDAAHAVFGVIAIVMKAAPIGAFGAMAFTIGKYGPAALGNLIGLVALFYATSALFVVLVLGTIAKFVGFNIFKFIGYIKDELLIVLGTSSSESALPQLMEKLERLGCSKSVVGLVVPTGYSFNLDGTNIYMTLATLFIAQALGIELSFGDQVAILLVAMLTSKGASGVTGAGFVTLAGTLAAVNPALVPGMAIVFSIDKFMSEVRALTNITGNGVAAVFVSWWEGELDHDRLRANLSRNVDPSDVETAVTTG.

A run of 8 helical transmembrane segments spans residues 24-44 (VLYVQVLFAIVVGVLVGWLSP), 62-82 (LIKMVIAPIIFCTVVSGIAHI), 105-125 (FALVLGLIVGNLFPVGHGLAA), 163-183 (GDILQVLLFAVLFGFALMALG), 201-221 (FGVIAIVMKAAPIGAFGAMAF), 234-254 (LIGLVALFYATSALFVVLVLG), 322-342 (IYMTLATLFIAQALGIELSFG), and 370-390 (AGTLAAVNPALVPGMAIVFSI).

The protein belongs to the dicarboxylate/amino acid:cation symporter (DAACS) (TC 2.A.23) family.

It is found in the cell inner membrane. Responsible for the transport of dicarboxylates such as succinate, fumarate, and malate from the periplasm across the membrane. This Rhodopseudomonas palustris (strain ATCC BAA-98 / CGA009) protein is C4-dicarboxylate transport protein.